The chain runs to 474 residues: Citrate synthase, mitochondrial (474 aa).

A mitochondrion-targeting transit peptide spans 1 to 35 (MASTLRLSTSALRSSTLAGKPVVQSVAFNGLRCYS). Residues His310, His356, and Asp411 contribute to the active site.

It belongs to the citrate synthase family.

Its subcellular location is the mitochondrion matrix. The enzyme catalyses oxaloacetate + acetyl-CoA + H2O = citrate + CoA + H(+). It participates in carbohydrate metabolism; tricarboxylic acid cycle; isocitrate from oxaloacetate: step 1/2. The chain is Citrate synthase, mitochondrial (citA) from Emericella nidulans (strain FGSC A4 / ATCC 38163 / CBS 112.46 / NRRL 194 / M139) (Aspergillus nidulans).